A 279-amino-acid polypeptide reads, in one-letter code: Probable thymidylate synthase (279 aa).

DUMP contacts are provided by residues arginine 21 and 136–137 (RR). The active-site Nucleophile is cysteine 156. Residues 177 to 180 (RSVD), asparagine 188, and 218 to 220 (HIY) each bind dUMP. Aspartate 180 lines the (6R)-5,10-methylene-5,6,7,8-tetrahydrofolate pocket.

This sequence belongs to the thymidylate synthase family.

It carries out the reaction dUMP + (6R)-5,10-methylene-5,6,7,8-tetrahydrofolate = 7,8-dihydrofolate + dTMP. In terms of biological role, sythesizes the thymine necessary for the viral DNA replication. The chain is Probable thymidylate synthase from Escherichia coli (Enterobacteria phage T5).